Here is a 551-residue protein sequence, read N- to C-terminus: Delta-selinene synthase TPS7FN (551 aa).

The (2E,6E)-farnesyl diphosphate site is built by Arg266, Asp303, Asp307, Arg444, and Asp447. Residues Asp303 and Asp307 each contribute to the Mg(2+) site. Residues 303–307 (DDIYD) carry the DDXXD motif motif. Residues Asp447, Ser451, and Glu455 each coordinate Mg(2+).

The protein belongs to the terpene synthase family. Tpsb subfamily. The cofactor is Mg(2+). Requires Mn(2+) as cofactor.

The enzyme catalyses (2E,6E)-farnesyl diphosphate = delta-selinene + diphosphate. It carries out the reaction (2E)-geranyl diphosphate = beta-myrcene + diphosphate. The catalysed reaction is (2E)-geranyl diphosphate = (4S)-limonene + diphosphate. It catalyses the reaction (2E,6E)-farnesyl diphosphate + H2O = selina-6-en-4-ol + diphosphate. Its pathway is secondary metabolite biosynthesis; terpenoid biosynthesis. Functionally, involved in sesquiterpene olefins biosynthesis, constituants of cannabinoids and terpenoids-rich resins. Catalyzes mainly the conversion of (2E)-farnesyl diphosphate to delta-selinene, and also produces minor products such as selina-6-en-4-ol. Can also use (2E)-geranyl diphosphate as substrate with low efficiency, producing minor amounts of myrcene and limonene. The protein is Delta-selinene synthase TPS7FN of Cannabis sativa (Hemp).